A 387-amino-acid polypeptide reads, in one-letter code: Arrestin-C (387 aa).

The protein belongs to the arrestin family. As to expression, retina and pineal gland.

Functionally, may play a role in an as yet undefined retina-specific signal transduction. Could bind to photoactivated-phosphorylated red/green opsins. The protein is Arrestin-C (arr3) of Xenopus laevis (African clawed frog).